Reading from the N-terminus, the 497-residue chain is tRNA (adenine(58)-N(1))-methyltransferase non-catalytic subunit TRM6 (497 aa).

A disordered region spans residues 69-102; the sequence is TNGGSLQPKKKKEEPTSETKEAGTDNRNIIDDGK. The span at 79-102 shows a compositional bias: basic and acidic residues; sequence KKEEPTSETKEAGTDNRNIIDDGK. Positions 94–104 are substrate; it reads NRNIIDDGKSQ. Position 107 is a phosphothreonine (threonine 107). Substrate stretches follow at residues 145-154 and 175-182; these read KYIKKKKKKY and REPGKINH. A disordered region spans residues 276 to 354; it reads SSEPKDIASV…EKQRRQEEQK (79 aa). Phosphoserine occurs at positions 298 and 305. Positions 311–354 are enriched in basic and acidic residues; it reads ESNHPEEQERMEIVSQDPDYKEPKESGSKKDYIQEKQRRQEEQK. Positions 349 and 377 each coordinate substrate. Substrate regions lie at residues 415 to 423 and 434 to 441; these read RERGGVINL and QVLPDRSH. The tract at residues 468–497 is disordered; the sequence is PSLKSSTSTLESHKTEEPAAKKRKCPESDS. Basic and acidic residues predominate over residues 478–497; it reads ESHKTEEPAAKKRKCPESDS.

This sequence belongs to the TRM6/GCD10 family. In terms of assembly, heterotetramer; composed of two copies of TRMT6 and two copies of TRMT61A.

Its subcellular location is the nucleus. Functionally, substrate-binding subunit of tRNA (adenine-N(1)-)-methyltransferase, which catalyzes the formation of N(1)-methyladenine at position 58 (m1A58) in initiator methionyl-tRNA. Together with the TRMT61A catalytic subunit, part of a mRNA N(1)-methyltransferase complex that mediates methylation of adenosine residues at the N(1) position of a small subset of mRNAs: N(1) methylation takes place in tRNA T-loop-like structures of mRNAs and is only present at low stoichiometries. The polypeptide is tRNA (adenine(58)-N(1))-methyltransferase non-catalytic subunit TRM6 (TRMT6) (Bos taurus (Bovine)).